A 128-amino-acid polypeptide reads, in one-letter code: MNLIQQLEQEEIARLTQNKTIPAFAPGDTVIVQVKVKEGTRERLQAYEGVVIAKRNRGLNSNFIVRKISSGEGVERTFQTYSPLVDSIEVKRRGDVRRAKLYYLRERSGKSARIKEKLNYKAPAAKKA.

The protein belongs to the bacterial ribosomal protein bL19 family.

This protein is located at the 30S-50S ribosomal subunit interface and may play a role in the structure and function of the aminoacyl-tRNA binding site. The sequence is that of Large ribosomal subunit protein bL19 from Aromatoleum aromaticum (strain DSM 19018 / LMG 30748 / EbN1) (Azoarcus sp. (strain EbN1)).